Here is a 128-residue protein sequence, read N- to C-terminus: MADEATRAAFMEIQASMIELTGKLKQVQNQMRNKEGDRKRAFLTLEELRPLPEETNTYKSIGRTFVLEPKTVLEGEQEQKLKDSEAAVASLQTSKEYLEKQVAEVENNLRELLQQEPGIAQQIMSMSM.

Coiled coils occupy residues 17–37 (MIEL…KEGD) and 81–115 (LKDS…LLQQ).

This sequence belongs to the prefoldin subunit beta family. In terms of assembly, heterohexamer of two PFD-alpha type and four PFD-beta type subunits forming prefoldin co-chaperone complex. Interacts with LSM8, a specific subunit of the LSM2-8 complex, which is a core component of the spliceosome.

It localises to the cytoplasm. It is found in the nucleus. In terms of biological role, binds specifically to cytosolic chaperonin (c-CPN) and transfers target proteins to it. Binds to nascent polypeptide chain and promotes folding in an environment in which there are many competing pathways for nonnative proteins. Together with other chaperonins, contribute to the regulation of gene expression by modulating the spliceosome function on pre-mRNA splicing post-transcriptionally by acting as a co-chaperone of Hsp90 to control levels of LSM8. Required for microtubules (MTs) organization and dynamicity. Involved in the process leading to microtubules dissociation in response to gibberellic acid (GA) probably due to the DELLA proteins-mediated translocation of the prefoldin co-chaperone complex from the cytoplasm to the nucleus. The protein is Prefoldin subunit 1 of Arabidopsis thaliana (Mouse-ear cress).